A 340-amino-acid polypeptide reads, in one-letter code: Ketol-acid reductoisomerase (NADP(+)) (340 aa).

Residues 3-183 (LPIYYDKDCD…GGGRTGIIHT (181 aa)) form the KARI N-terminal Rossmann domain. NADP(+)-binding positions include 26-29 (FGSQ), S54, and 84-87 (DEIQ). The active site involves H109. An NADP(+)-binding site is contributed by G135. The 146-residue stretch at 184 to 329 (TFKDETETDL…KRLRAMMPWI (146 aa)) folds into the KARI C-terminal knotted domain. Mg(2+) is bound by residues D192, E196, E228, and E232. S253 provides a ligand contact to substrate.

This sequence belongs to the ketol-acid reductoisomerase family. It depends on Mg(2+) as a cofactor.

The enzyme catalyses (2R)-2,3-dihydroxy-3-methylbutanoate + NADP(+) = (2S)-2-acetolactate + NADPH + H(+). It carries out the reaction (2R,3R)-2,3-dihydroxy-3-methylpentanoate + NADP(+) = (S)-2-ethyl-2-hydroxy-3-oxobutanoate + NADPH + H(+). Its pathway is amino-acid biosynthesis; L-isoleucine biosynthesis; L-isoleucine from 2-oxobutanoate: step 2/4. It functions in the pathway amino-acid biosynthesis; L-valine biosynthesis; L-valine from pyruvate: step 2/4. Functionally, involved in the biosynthesis of branched-chain amino acids (BCAA). Catalyzes an alkyl-migration followed by a ketol-acid reduction of (S)-2-acetolactate (S2AL) to yield (R)-2,3-dihydroxy-isovalerate. In the isomerase reaction, S2AL is rearranged via a Mg-dependent methyl migration to produce 3-hydroxy-3-methyl-2-ketobutyrate (HMKB). In the reductase reaction, this 2-ketoacid undergoes a metal-dependent reduction by NADPH to yield (R)-2,3-dihydroxy-isovalerate. This Nitratiruptor sp. (strain SB155-2) protein is Ketol-acid reductoisomerase (NADP(+)).